The chain runs to 320 residues: Phosphatidylserine decarboxylase proenzyme (320 aa).

Residues Asp-90, His-147, and Ser-254 each act as charge relay system; for autoendoproteolytic cleavage activity in the active site. Ser-254 serves as the catalytic Schiff-base intermediate with substrate; via pyruvic acid; for decarboxylase activity. Ser-254 carries the pyruvic acid (Ser); by autocatalysis modification. The tract at residues 288–320 (EASTAAEPAPLPEEEIRAEHRASPLVDDTQDQG) is disordered.

This sequence belongs to the phosphatidylserine decarboxylase family. PSD-B subfamily. Prokaryotic type I sub-subfamily. Heterodimer of a large membrane-associated beta subunit and a small pyruvoyl-containing alpha subunit. Pyruvate is required as a cofactor. Is synthesized initially as an inactive proenzyme. Formation of the active enzyme involves a self-maturation process in which the active site pyruvoyl group is generated from an internal serine residue via an autocatalytic post-translational modification. Two non-identical subunits are generated from the proenzyme in this reaction, and the pyruvate is formed at the N-terminus of the alpha chain, which is derived from the carboxyl end of the proenzyme. The autoendoproteolytic cleavage occurs by a canonical serine protease mechanism, in which the side chain hydroxyl group of the serine supplies its oxygen atom to form the C-terminus of the beta chain, while the remainder of the serine residue undergoes an oxidative deamination to produce ammonia and the pyruvoyl prosthetic group on the alpha chain. During this reaction, the Ser that is part of the protease active site of the proenzyme becomes the pyruvoyl prosthetic group, which constitutes an essential element of the active site of the mature decarboxylase.

Its subcellular location is the cell membrane. The enzyme catalyses a 1,2-diacyl-sn-glycero-3-phospho-L-serine + H(+) = a 1,2-diacyl-sn-glycero-3-phosphoethanolamine + CO2. The protein operates within phospholipid metabolism; phosphatidylethanolamine biosynthesis; phosphatidylethanolamine from CDP-diacylglycerol: step 2/2. In terms of biological role, catalyzes the formation of phosphatidylethanolamine (PtdEtn) from phosphatidylserine (PtdSer). This Klebsiella pneumoniae (strain 342) protein is Phosphatidylserine decarboxylase proenzyme.